Consider the following 339-residue polypeptide: Diguanylate cyclase VdcA (339 aa).

Residues 206 to 339 (QQVSLIMLDI…NLGRNRVMPL (134 aa)) enclose the GGDEF domain. Mg(2+) is bound at residue D214. Substrate is bound by residues N222 and D231. E257 provides a ligand contact to Mg(2+). The active-site Proton acceptor is the E257.

It depends on Mg(2+) as a cofactor.

The catalysed reaction is 2 GTP = 3',3'-c-di-GMP + 2 diphosphate. It participates in purine metabolism; 3',5'-cyclic di-GMP biosynthesis. Functionally, diguanylate cyclase (DGC) that catalyzes the synthesis of cyclic diguanylate (c-di-GMP) via the condensation of 2 GTP molecules. Is involved in the modulation of intracellular c-di-GMP levels. Cyclic-di-GMP is a second messenger which positively regulates biofilm formation and negatively regulates virulence in V.cholerae, and is proposed to play an important role in the transition from persistence in the environment to survival in the host. Overexpression of vdcA results in increased biofilm formation, and reduced motility and virulence. The protein is Diguanylate cyclase VdcA (vdcA) of Vibrio cholerae serotype O1 (strain ATCC 39315 / El Tor Inaba N16961).